We begin with the raw amino-acid sequence, 328 residues long: Ribosomal protein L11 methyltransferase (328 aa).

Residues T153, G174, D196, and N263 each coordinate S-adenosyl-L-methionine.

This sequence belongs to the methyltransferase superfamily. PrmA family.

The protein resides in the cytoplasm. The enzyme catalyses L-lysyl-[protein] + 3 S-adenosyl-L-methionine = N(6),N(6),N(6)-trimethyl-L-lysyl-[protein] + 3 S-adenosyl-L-homocysteine + 3 H(+). Methylates ribosomal protein L11. The sequence is that of Ribosomal protein L11 methyltransferase from Chloroflexus aurantiacus (strain ATCC 29366 / DSM 635 / J-10-fl).